The primary structure comprises 481 residues: NADH-quinone oxidoreductase subunit N (481 aa).

The next 14 helical transmembrane spans lie at 11–31 (ALPE…DLWA), 38–58 (WTHY…LAVW), 74–94 (GMSR…FVYA), 103–123 (IFKG…SVMV), 128–148 (FLTA…LIAL), 163–183 (FVLG…VYGA), 208–228 (LGLV…PFHM), 241–261 (VTAL…FRIL), 272–292 (WSLM…LAAI), 300–322 (MLAY…GAVG), 332–352 (TYAL…DGDN), 368–388 (VWLA…PPLM), 404–424 (GYVW…FYYL), and 450–470 (SLLS…QTVI).

This sequence belongs to the complex I subunit 2 family. In terms of assembly, NDH-1 is composed of 14 different subunits. Subunits NuoA, H, J, K, L, M, N constitute the membrane sector of the complex.

The protein localises to the cell inner membrane. The catalysed reaction is a quinone + NADH + 5 H(+)(in) = a quinol + NAD(+) + 4 H(+)(out). In terms of biological role, NDH-1 shuttles electrons from NADH, via FMN and iron-sulfur (Fe-S) centers, to quinones in the respiratory chain. The immediate electron acceptor for the enzyme in this species is believed to be ubiquinone. Couples the redox reaction to proton translocation (for every two electrons transferred, four hydrogen ions are translocated across the cytoplasmic membrane), and thus conserves the redox energy in a proton gradient. This is NADH-quinone oxidoreductase subunit N from Neisseria gonorrhoeae (strain ATCC 700825 / FA 1090).